Reading from the N-terminus, the 206-residue chain is Peptidyl-tRNA hydrolase (206 aa).

Tyr-14 contributes to the tRNA binding site. His-19 acts as the Proton acceptor in catalysis. 3 residues coordinate tRNA: Tyr-64, Asn-66, and Asn-112.

It belongs to the PTH family. In terms of assembly, monomer.

The protein resides in the cytoplasm. It carries out the reaction an N-acyl-L-alpha-aminoacyl-tRNA + H2O = an N-acyl-L-amino acid + a tRNA + H(+). In terms of biological role, hydrolyzes ribosome-free peptidyl-tRNAs (with 1 or more amino acids incorporated), which drop off the ribosome during protein synthesis, or as a result of ribosome stalling. Functionally, catalyzes the release of premature peptidyl moieties from peptidyl-tRNA molecules trapped in stalled 50S ribosomal subunits, and thus maintains levels of free tRNAs and 50S ribosomes. This chain is Peptidyl-tRNA hydrolase, found in Rhodopseudomonas palustris (strain ATCC BAA-98 / CGA009).